Here is an 861-residue protein sequence, read N- to C-terminus: MEIGSAGPVGAQPLLMVPRRPGYGTMGKPTKLLANCFQVEIPKIDVYLYEVDIKPDKCPRRVNREVVDSMVQHFKVTIFGDRRPVYDGKRSLYTANPLPVATTGVDLDATLPGEGGKDRPFKVSIKFVSRVSWHLLHEVLTGRTLPEPLELDKPISTNPVHAVDVVLRHLPSMKYTPVGRSFFSAPEGYDHPLGGGREVWFGFHQSVRPAMWKMMLNIDVSATAFYKAQPVIQFMCEVLDIHNIDEQPRPLTDSHRVKSTKEIKGLKVEVTHCGTMRRKYRVCNVTRRPASHQTFPLQLENGQTVERTVAQYFREKYTLQLKYPHLPCLQVGQEQKHTYLPLEVCNIVAGQRCIKKLTDNQTSTMIKATARSAPDRQEEISRLVRSANYETDPFVQEFQFKVRDEMAHVTGRVLPAPMLQYGGRNRTVATPSHGVWDMRGKQFHTGVEIEMWAIACFATQRQCREEILKGFTDQLRKISKDAGMPIQGQPCFCKYAQGADSVEPMFRHLKNTYSGLQLIIVILPGKTPVYAEVKRVGDTLLGMATQCVQVKNVIKTSPQTLSNLCLKINVKLGGINNILVPHQRPSVFQQPVIFLGADVTHPPAGDGKKPSIAAVVGSMDAHPSRYCATVRVQRPRQEIIQDLASMVRELLIQFYKSTRFKPTRIIFYRDGVSEGQFRQVLYYELLAIREACISLEKDYQPGITYIVVQKRHHTRLFCADRTERVGRSGNIPAGTTVDTDITHPYEFDFYLCSHAGIQGTSRPSHYHVLWDDNCFTADELQLLTYQPSAHTYVHCTRSVSIPAPAYYAHLVAFRARYHLVDKERDSAEGSHVSGQSNGRDPQALAKAAQIHQDTLRTMYFA.

Residue Met1 is modified to N-acetylmethionine. Residues 230 to 349 (PVIQFMCEVL…LPLEVCNIVA (120 aa)) enclose the PAZ domain. In terms of domain architecture, Piwi spans 518–820 (LIIVILPGKT…VAFRARYHLV (303 aa)). The interaction with guide RNA stretch occupies residues 530–567 (YAEVKRVGDTLLGMATQCVQVKNVIKTSPQTLSNLCLK). Residues Asp598, Glu638, and Asp670 each coordinate a divalent metal cation. Residues 758–806 (QGTSRPSHYHVLWDDNCFTADELQLLTYQPSAHTYVHCTRSVSIPAPAY) are interaction with guide RNA. His809 lines the a divalent metal cation pocket. Positions 824–847 (RDSAEGSHVSGQSNGRDPQALAKA) are disordered. The residue at position 826 (Ser826) is a Phosphoserine.

This sequence belongs to the argonaute family. Ago subfamily. In terms of assembly, interacts with EIF4B, IMP8, PRMT5 and TNRC6B. Interacts with APOBEC3F, APOBEC3G and APOBEC3H. Interacts with EDC4. Post-translationally, ubiquitinated on surface-exposed lysines by a SCF-like E3 ubiquitin-protein ligase complex containing ZSWIM8 during target-directed microRNA degradation (TDMD), a process that mediates degradation of microRNAs (miRNAs). Ubiquitination by the SCF-like E3 ubiquitin-protein ligase complex containing ZSWIM8 leads to its subsequent degradation, thereby exposing miRNAs for degradation. ZSWIM8 recognizes and binds AGO3 when it is engaged with a TDMD target.

It localises to the cytoplasm. It is found in the P-body. It catalyses the reaction Endonucleolytic cleavage to 5'-phosphomonoester.. Functionally, required for RNA-mediated gene silencing (RNAi). Binds to short RNAs such as microRNAs (miRNAs) and represses the translation of mRNAs which are complementary to them. Proposed to be involved in stabilization of small RNA derivates (siRNA) derived from processed RNA polymerase III-transcribed Alu repeats containing a DR2 retinoic acid response element (RARE) in stem cells and in the subsequent siRNA-dependent degradation of a subset of RNA polymerase II-transcribed coding mRNAs by recruiting a mRNA decapping complex involving EDC4. Possesses RNA slicer activity but only on select RNAs bearing 5'- and 3'-flanking sequences to the region of guide-target complementarity. This chain is Protein argonaute-3 (AGO3), found in Bos taurus (Bovine).